Here is a 335-residue protein sequence, read N- to C-terminus: Beta-hexosaminidase (335 aa).

Substrate is bound by residues aspartate 60, arginine 68, arginine 133, and 163–164; that span reads KH. Catalysis depends on histidine 176, which acts as the Proton donor/acceptor. Aspartate 247 acts as the Nucleophile in catalysis.

This sequence belongs to the glycosyl hydrolase 3 family. NagZ subfamily.

Its subcellular location is the cytoplasm. It catalyses the reaction Hydrolysis of terminal non-reducing N-acetyl-D-hexosamine residues in N-acetyl-beta-D-hexosaminides.. Its pathway is cell wall biogenesis; peptidoglycan recycling. Functionally, plays a role in peptidoglycan recycling by cleaving the terminal beta-1,4-linked N-acetylglucosamine (GlcNAc) from peptide-linked peptidoglycan fragments, giving rise to free GlcNAc, anhydro-N-acetylmuramic acid and anhydro-N-acetylmuramic acid-linked peptides. The sequence is that of Beta-hexosaminidase from Xylella fastidiosa (strain M12).